The following is a 732-amino-acid chain: Anthranilate synthase (732 aa).

The Glutamine amidotransferase type-1 domain maps to 533-728 (RVLLVDHDDS…MDRLAAGALT (196 aa)). 583 to 585 (GPG) contacts L-glutamine. The active-site Nucleophile; for GATase activity is Cys610. L-glutamine-binding positions include Gln614 and 660-661 (SL). Catalysis depends on for GATase activity residues His699 and Glu701.

The enzyme catalyses chorismate + L-glutamine = anthranilate + pyruvate + L-glutamate + H(+). It participates in amino-acid biosynthesis; L-tryptophan biosynthesis; L-tryptophan from chorismate: step 1/5. This is Anthranilate synthase (trpE(G)) from Azospirillum brasilense.